The chain runs to 49 residues: DNA-directed RNA polymerase subunit Rpo12 (49 aa).

Zn(2+)-binding residues include Cys11, Cys27, and Cys30.

Belongs to the archaeal Rpo12/eukaryotic RPC10 RNA polymerase subunit family. Part of the RNA polymerase complex. Requires Zn(2+) as cofactor.

Its subcellular location is the cytoplasm. The protein localises to the chromosome. It catalyses the reaction RNA(n) + a ribonucleoside 5'-triphosphate = RNA(n+1) + diphosphate. DNA-dependent RNA polymerase (RNAP) catalyzes the transcription of DNA into RNA using the four ribonucleoside triphosphates as substrates. The polypeptide is DNA-directed RNA polymerase subunit Rpo12 (Thermococcus kodakarensis (strain ATCC BAA-918 / JCM 12380 / KOD1) (Pyrococcus kodakaraensis (strain KOD1))).